The chain runs to 284 residues: RNase adapter protein RapZ (284 aa).

8 to 15 provides a ligand contact to ATP; the sequence is GRSGSGKS. 56-59 provides a ligand contact to GTP; sequence DVRN. Positions 266 to 284 are RNA-binding; that stretch reads RSRGKNVQSRHRTLEKRRS.

It belongs to the RapZ-like family. RapZ subfamily. In terms of assembly, homotrimer.

Functionally, modulates the synthesis of GlmS, by affecting the processing and stability of the regulatory small RNA GlmZ. When glucosamine-6-phosphate (GlcN6P) concentrations are high in the cell, RapZ binds GlmZ and targets it to cleavage by RNase E. Consequently, GlmZ is inactivated and unable to activate GlmS synthesis. Under low GlcN6P concentrations, RapZ is sequestered and inactivated by an other regulatory small RNA, GlmY, preventing GlmZ degradation and leading to synthesis of GlmS. The polypeptide is RNase adapter protein RapZ (Erwinia tasmaniensis (strain DSM 17950 / CFBP 7177 / CIP 109463 / NCPPB 4357 / Et1/99)).